A 95-amino-acid chain; its full sequence is Aspartyl/glutamyl-tRNA(Asn/Gln) amidotransferase subunit C (95 aa).

It belongs to the GatC family. Heterotrimer of A, B and C subunits.

It catalyses the reaction L-glutamyl-tRNA(Gln) + L-glutamine + ATP + H2O = L-glutaminyl-tRNA(Gln) + L-glutamate + ADP + phosphate + H(+). The enzyme catalyses L-aspartyl-tRNA(Asn) + L-glutamine + ATP + H2O = L-asparaginyl-tRNA(Asn) + L-glutamate + ADP + phosphate + 2 H(+). In terms of biological role, allows the formation of correctly charged Asn-tRNA(Asn) or Gln-tRNA(Gln) through the transamidation of misacylated Asp-tRNA(Asn) or Glu-tRNA(Gln) in organisms which lack either or both of asparaginyl-tRNA or glutaminyl-tRNA synthetases. The reaction takes place in the presence of glutamine and ATP through an activated phospho-Asp-tRNA(Asn) or phospho-Glu-tRNA(Gln). The polypeptide is Aspartyl/glutamyl-tRNA(Asn/Gln) amidotransferase subunit C (Brucella abortus (strain S19)).